The primary structure comprises 465 residues: ATP synthase subunit beta (465 aa).

G153–T160 contributes to the ATP binding site.

The protein belongs to the ATPase alpha/beta chains family. In terms of assembly, F-type ATPases have 2 components, CF(1) - the catalytic core - and CF(0) - the membrane proton channel. CF(1) has five subunits: alpha(3), beta(3), gamma(1), delta(1), epsilon(1). CF(0) has three main subunits: a(1), b(2) and c(9-12). The alpha and beta chains form an alternating ring which encloses part of the gamma chain. CF(1) is attached to CF(0) by a central stalk formed by the gamma and epsilon chains, while a peripheral stalk is formed by the delta and b chains.

Its subcellular location is the cell membrane. It catalyses the reaction ATP + H2O + 4 H(+)(in) = ADP + phosphate + 5 H(+)(out). In terms of biological role, produces ATP from ADP in the presence of a proton gradient across the membrane. The catalytic sites are hosted primarily by the beta subunits. This chain is ATP synthase subunit beta, found in Clostridium perfringens (strain ATCC 13124 / DSM 756 / JCM 1290 / NCIMB 6125 / NCTC 8237 / Type A).